The following is a 358-amino-acid chain: Transmembrane protein 144 homolog B (358 aa).

Helical transmembrane passes span Val-6–Val-26, Leu-35–Ile-55, Ile-60–Val-79, Ile-86–Lys-108, Pro-122–Ile-142, Ile-211–Met-231, Leu-244–Val-264, Ile-279–Ala-299, Ile-307–Tyr-327, and Leu-337–Ser-357.

It belongs to the TMEM144 family.

The protein localises to the membrane. The sequence is that of Transmembrane protein 144 homolog B (tmem144B) from Dictyostelium discoideum (Social amoeba).